Reading from the N-terminus, the 180-residue chain is Large ribosomal subunit protein uL6 (180 aa).

The protein belongs to the universal ribosomal protein uL6 family. In terms of assembly, part of the 50S ribosomal subunit.

Functionally, this protein binds to the 23S rRNA, and is important in its secondary structure. It is located near the subunit interface in the base of the L7/L12 stalk, and near the tRNA binding site of the peptidyltransferase center. This is Large ribosomal subunit protein uL6 from Caldanaerobacter subterraneus subsp. tengcongensis (strain DSM 15242 / JCM 11007 / NBRC 100824 / MB4) (Thermoanaerobacter tengcongensis).